A 35-amino-acid chain; its full sequence is Potassium channel toxin alpha-KTx 23.2 (35 aa).

Intrachain disulfides connect C6–C26, C12–C31, and C16–C33.

Belongs to the short scorpion toxin superfamily. Potassium channel inhibitor family. Alpha-KTx 23 subfamily. As to expression, expressed by the venom gland.

It is found in the secreted. In terms of biological role, selectively and irreversibly binds (K(d)=2.9 pM) and blocks Kv1.3/KCNA3 potassium channels of human T-lymphocytes. Weakly blocks Kv1.2/KCNA2 (9%). This chain is Potassium channel toxin alpha-KTx 23.2, found in Vaejovis mexicanus smithi (Mexican scorpion).